A 748-amino-acid polypeptide reads, in one-letter code: Polyribonucleotide nucleotidyltransferase (748 aa).

The Mg(2+) site is built by Asp-487 and Asp-493. A KH domain is found at 554 to 613 (PSTTTIKIDKDKIRDIIGPSGKVIKEICETSGAKIDISDDGTVSVYASDRDKLKVALDKI). In terms of domain architecture, S1 motif spans 623–691 (GEIFNGTVVK…NKGKAKLTIK (69 aa)). Positions 693-733 (ADKDKSSNNTKPKTHVNNTKDNSEPEQRRDSSKKRAWNEDN) are disordered. The segment covering 699–712 (SNNTKPKTHVNNTK) has biased composition (polar residues). A compositionally biased stretch (basic and acidic residues) spans 713–722 (DNSEPEQRRD).

The protein belongs to the polyribonucleotide nucleotidyltransferase family. Mg(2+) is required as a cofactor.

The protein resides in the cytoplasm. The enzyme catalyses RNA(n+1) + phosphate = RNA(n) + a ribonucleoside 5'-diphosphate. Involved in mRNA degradation. Catalyzes the phosphorolysis of single-stranded polyribonucleotides processively in the 3'- to 5'-direction. The sequence is that of Polyribonucleotide nucleotidyltransferase from Rickettsia peacockii (strain Rustic).